The following is a 270-amino-acid chain: Vegetative storage protein 1 (270 aa).

Residues 1–17 (MKILSLSLLLLLAATVS) form the signal peptide. Residues asparagine 115 and asparagine 215 are each glycosylated (N-linked (GlcNAc...) asparagine).

This sequence belongs to the APS1/VSP family. Expressed in leaves and in gynoecia, especially in styles, the basal and distal ends of ovaries and in siliques.

Functionally, may function as somatic storage protein during early seedling development. This chain is Vegetative storage protein 1 (VSP1), found in Arabidopsis thaliana (Mouse-ear cress).